Consider the following 103-residue polypeptide: UPF0102 protein aq_041 (103 aa).

Belongs to the UPF0102 family.

The polypeptide is UPF0102 protein aq_041 (Aquifex aeolicus (strain VF5)).